A 468-amino-acid polypeptide reads, in one-letter code: Homocitrate synthase (468 aa).

The 256-residue stretch at 11-266 folds into the Pyruvate carboxyltransferase domain; the sequence is VGILDSTLRE…IEVVDLKKLS (256 aa). Arginine 19 is a 2-oxoglutarate binding site. Residue glutamate 20 participates in Mg(2+) binding. 2-oxoglutarate-binding residues include histidine 83, arginine 143, and threonine 177. Mg(2+)-binding residues include histidine 205 and histidine 207. Catalysis depends on histidine 299, which acts as the Proton acceptor.

Belongs to the alpha-IPM synthase/homocitrate synthase family. Homocitrate synthase LYS20/LYS21 subfamily. It depends on Mg(2+) as a cofactor. Mn(2+) serves as cofactor.

It carries out the reaction acetyl-CoA + 2-oxoglutarate + H2O = (2R)-homocitrate + CoA + H(+). Its pathway is amino-acid biosynthesis; L-lysine biosynthesis via AAA pathway; L-alpha-aminoadipate from 2-oxoglutarate: step 1/5. Inhibited by lysine. Functionally, catalyzes the aldol-type condensation of 2-oxoglutarate with acetyl-CoA to yield homocitrate. Carries out the first step of the alpha-aminoadipate (AAA) lysine biosynthesis pathway. Does not display 2-isopropylmalate synthase and citramalate synthase activities since it cannot use 2-oxoisovalerate or pyruvate as substrate. This Sulfolobus acidocaldarius (strain ATCC 33909 / DSM 639 / JCM 8929 / NBRC 15157 / NCIMB 11770) protein is Homocitrate synthase.